A 313-amino-acid chain; its full sequence is Formate-nitrite transporter (313 aa).

Over 1 to 46 the chain is Cytoplasmic; it reads MTKGSKYTIDPISVKTACTSEESYIRCVEYGKGKAHYPNLSLLAKA. The chain crosses the membrane as a helical span at residues 47–67; that stretch reads ILAGVFVGVCAHASGIAGGHF. The Extracellular portion of the chain corresponds to 68–77; that stretch reads YYHKLREHVG. The helical transmembrane segment at 78–98 threads the bilayer; sequence ISMSAFVYGFTFPIAFLCIIA. Topologically, residues 99–127 are cytoplasmic; the sequence is TGSDLFTGNTLAVTTALLQRKVTLLEYLR. The chain crosses the membrane as a helical span at residues 128–148; sequence VMSISLFGNYVGAVSFAFFVS. Residues 149 to 184 lie on the Extracellular side of the membrane; that stretch reads HLSGAFKKHEEIGKNHIFQFLNDIAEKKVSHTFVQC. Residues 185–205 form a helical membrane-spanning segment; it reads VCLAIGCNIFVCLAVYFVLTI. Residues 206–210 lie on the Cytoplasmic side of the membrane; the sequence is KDGSG. The helical transmembrane segment at 211-231 threads the bilayer; the sequence is MVFSVFFAVYAFAIAGYEHII. Residues 232 to 256 are Extracellular-facing; the sequence is ANMYTLNLALMIEANVDWTKVYVDN. Residues 257-277 form a helical membrane-spanning segment; sequence LLPTLIGNYIAGAIVLACPLF. Over 278–313 the chain is Cytoplasmic; that stretch reads YIYRHSYSDYEKTRGDGGNSGLKSLSIEMQNGSSGR. Positions 290-313 are disordered; that stretch reads TRGDGGNSGLKSLSIEMQNGSSGR. The segment covering 298 to 313 has biased composition (polar residues); that stretch reads GLKSLSIEMQNGSSGR.

Belongs to the FNT transporter (TC 1.A.16) family. In terms of assembly, homopentamer.

It is found in the cell membrane. The protein localises to the vacuole membrane. The catalysed reaction is (S)-lactate(in) + H(+)(in) = (S)-lactate(out) + H(+)(out). It catalyses the reaction formate(in) + H(+)(in) = formate(out) + H(+)(out). The enzyme catalyses pyruvate(out) + H(+)(out) = pyruvate(in) + H(+)(in). It carries out the reaction acetate(out) + H(+)(out) = acetate(in) + H(+)(in). With respect to regulation, inhibited by the Malaria Box compound MMV007839 and its derivatives BH296 and BH267.meta. In terms of biological role, monocarboxylate-proton symporter that mediates the efflux of the waste product lactate in the intraerythrocytic parasites; active in acidic-to-neutral pH range. Transports L-lactate. The polypeptide is Formate-nitrite transporter (Plasmodium vivax).